Consider the following 387-residue polypeptide: MSRVGILLLNLGGPEQLEDVRPFLFNLFSDPEIIRLPFPWLQKPLAWFISTMRFQKSQENYKEIGGGSPLRSITEEQALAIQQQLEQKGLLTQMYIGMRYWHPFTEEALTRIKREQVEKLVILPLYPQYSISTSGSSFRLLDKLWEKDSELKKIEYTVIPSWHQRPGYVQAMVELITQQLDQSPNPDQVHIFFSAHGVPVSYVEEAGDPYQAEIEECVDKIMKTLNCSNPHTLAYQSRVGPVEWLKPYTEDAIEELAAGGVKDLLVVPISFVSEHIETLQEIDIEYRELAEEAGISNFYRVPALNTHPVFINDLADLVMEALDAPSRDFSDAIQMKKIIKMYPQERWQWGLTTTAEVWNGRLAMVGFMALLLELITGYGPLHFAGLL.

The Fe cation site is built by histidine 196 and glutamate 277.

This sequence belongs to the ferrochelatase family.

It localises to the cytoplasm. It carries out the reaction heme b + 2 H(+) = protoporphyrin IX + Fe(2+). Its pathway is porphyrin-containing compound metabolism; protoheme biosynthesis; protoheme from protoporphyrin-IX: step 1/1. Functionally, catalyzes the ferrous insertion into protoporphyrin IX. This is Ferrochelatase from Trichodesmium erythraeum (strain IMS101).